A 319-amino-acid chain; its full sequence is Cobalamin biosynthesis protein CbiB (319 aa).

5 helical membrane-spanning segments follow: residues 56 to 76 (VMWV…LALA), 82 to 102 (WFGW…RSLA), 153 to 173 (VDGI…LAMA), 204 to 224 (VANY…AGLC), and 296 to 316 (LMWV…CGLS).

This sequence belongs to the CobD/CbiB family.

It is found in the cell membrane. Its pathway is cofactor biosynthesis; adenosylcobalamin biosynthesis. In terms of biological role, converts cobyric acid to cobinamide by the addition of aminopropanol on the F carboxylic group. However, the true cosubstrate could be (R)-1-amino-2-propanol O-2-phosphate, leading to cobinamide phosphate. This is Cobalamin biosynthesis protein CbiB from Salmonella paratyphi B (strain ATCC BAA-1250 / SPB7).